The primary structure comprises 241 residues: Ribonuclease PH (241 aa).

Phosphate-binding positions include arginine 87 and 125-127 (GTR).

The protein belongs to the RNase PH family. Homohexameric ring arranged as a trimer of dimers.

The catalysed reaction is tRNA(n+1) + phosphate = tRNA(n) + a ribonucleoside 5'-diphosphate. Functionally, phosphorolytic 3'-5' exoribonuclease that plays an important role in tRNA 3'-end maturation. Removes nucleotide residues following the 3'-CCA terminus of tRNAs; can also add nucleotides to the ends of RNA molecules by using nucleoside diphosphates as substrates, but this may not be physiologically important. Probably plays a role in initiation of 16S rRNA degradation (leading to ribosome degradation) during starvation. The sequence is that of Ribonuclease PH from Salinispora arenicola (strain CNS-205).